Here is a 120-residue protein sequence, read N- to C-terminus: MGLPQIHRLKHRQDFQAVYGTGKRYHGSHLTLISLEDSCPDAPGPSRFGISISKKVSKKAVVRNRLKRQIRAVIRELLPEIAAGWRGIIIIRPGAIECNYEHFLRELKQLLVKANIIHGH.

This sequence belongs to the RnpA family. Consists of a catalytic RNA component (M1 or rnpB) and a protein subunit.

It carries out the reaction Endonucleolytic cleavage of RNA, removing 5'-extranucleotides from tRNA precursor.. Functionally, RNaseP catalyzes the removal of the 5'-leader sequence from pre-tRNA to produce the mature 5'-terminus. It can also cleave other RNA substrates such as 4.5S RNA. The protein component plays an auxiliary but essential role in vivo by binding to the 5'-leader sequence and broadening the substrate specificity of the ribozyme. The polypeptide is Ribonuclease P protein component (Microcystis aeruginosa (strain NIES-843 / IAM M-2473)).